Consider the following 127-residue polypeptide: MAIVGLGTDIVEIERIQAHVARAGNKLAKRVLTEAELAIYTAHSQPSRYLAKRFAAKEAAAKALGTGIGRGVSFQHIHIGNNEDGAPTIHFTEGALARLQQLKATVGHISIADEKSYAIVTVIIESQ.

Mg(2+)-binding residues include D9 and E58.

Belongs to the P-Pant transferase superfamily. AcpS family. Mg(2+) is required as a cofactor.

The protein resides in the cytoplasm. It carries out the reaction apo-[ACP] + CoA = holo-[ACP] + adenosine 3',5'-bisphosphate + H(+). Functionally, transfers the 4'-phosphopantetheine moiety from coenzyme A to a Ser of acyl-carrier-protein. The chain is Holo-[acyl-carrier-protein] synthase from Shewanella baltica (strain OS195).